Here is a 425-residue protein sequence, read N- to C-terminus: Serine--tRNA ligase (425 aa).

228 to 230 (TAE) contacts L-serine. 259–261 (RSE) contributes to the ATP binding site. An L-serine-binding site is contributed by Glu-282. Residue 346–349 (EIAS) participates in ATP binding. Residue Ser-382 coordinates L-serine.

Belongs to the class-II aminoacyl-tRNA synthetase family. Type-1 seryl-tRNA synthetase subfamily. As to quaternary structure, homodimer. The tRNA molecule binds across the dimer.

It localises to the cytoplasm. The catalysed reaction is tRNA(Ser) + L-serine + ATP = L-seryl-tRNA(Ser) + AMP + diphosphate + H(+). It carries out the reaction tRNA(Sec) + L-serine + ATP = L-seryl-tRNA(Sec) + AMP + diphosphate + H(+). It participates in aminoacyl-tRNA biosynthesis; selenocysteinyl-tRNA(Sec) biosynthesis; L-seryl-tRNA(Sec) from L-serine and tRNA(Sec): step 1/1. Catalyzes the attachment of serine to tRNA(Ser). Is also able to aminoacylate tRNA(Sec) with serine, to form the misacylated tRNA L-seryl-tRNA(Sec), which will be further converted into selenocysteinyl-tRNA(Sec). The chain is Serine--tRNA ligase from Rickettsia felis (strain ATCC VR-1525 / URRWXCal2) (Rickettsia azadi).